We begin with the raw amino-acid sequence, 60 residues long: Large ribosomal subunit protein bL32 (60 aa).

The protein belongs to the bacterial ribosomal protein bL32 family.

The chain is Large ribosomal subunit protein bL32 from Borrelia duttonii (strain Ly).